Here is a 383-residue protein sequence, read N- to C-terminus: 4-hydroxy-3-methylbut-2-en-1-yl diphosphate synthase (flavodoxin) (383 aa).

[4Fe-4S] cluster-binding residues include cysteine 275, cysteine 278, cysteine 310, and glutamate 317.

The protein belongs to the IspG family. It depends on [4Fe-4S] cluster as a cofactor.

The enzyme catalyses (2E)-4-hydroxy-3-methylbut-2-enyl diphosphate + oxidized [flavodoxin] + H2O + 2 H(+) = 2-C-methyl-D-erythritol 2,4-cyclic diphosphate + reduced [flavodoxin]. The protein operates within isoprenoid biosynthesis; isopentenyl diphosphate biosynthesis via DXP pathway; isopentenyl diphosphate from 1-deoxy-D-xylulose 5-phosphate: step 5/6. In terms of biological role, converts 2C-methyl-D-erythritol 2,4-cyclodiphosphate (ME-2,4cPP) into 1-hydroxy-2-methyl-2-(E)-butenyl 4-diphosphate. This chain is 4-hydroxy-3-methylbut-2-en-1-yl diphosphate synthase (flavodoxin), found in Dinoroseobacter shibae (strain DSM 16493 / NCIMB 14021 / DFL 12).